The following is a 373-amino-acid chain: 3 beta-hydroxysteroid dehydrogenase/Delta 5--&gt;4-isomerase type 1 (373 aa).

Residues 10 to 15, Y155, and K159 contribute to the NADP(+) site; that span reads GAGGFL. The active-site Proton donor is K159. Residues 288-308 traverse the membrane as a helical segment; the sequence is VALLYWLGFLLELVSFLLRPV.

It belongs to the 3-beta-HSD family. As to expression, high levels in adrenal gland, kidney and male liver. Low levels in female liver.

The protein localises to the endoplasmic reticulum membrane. The protein resides in the mitochondrion membrane. The enzyme catalyses a 3beta-hydroxy-Delta(5)-steroid + NAD(+) = a 3-oxo-Delta(5)-steroid + NADH + H(+). It catalyses the reaction pregnenolone + NAD(+) = pregn-5-ene-3,20-dione + NADH + H(+). The catalysed reaction is 3beta-hydroxyandrost-5-en-17-one + NAD(+) = androst-5-ene-3,17-dione + NADH + H(+). It carries out the reaction androst-5-en-3beta,17beta-diol + NAD(+) = 17beta-hydroxy-androst-5-en-3-one + NADH + H(+). The enzyme catalyses a 3beta-hydroxysteroid + NADP(+) = a 3-oxosteroid + NADPH + H(+). It catalyses the reaction 5alpha-androstane-3beta,17beta-diol + NADP(+) = 17beta-hydroxy-5alpha-androstan-3-one + NADPH + H(+). The catalysed reaction is 3beta-hydroxy-5alpha-androstan-17-one + NADP(+) = 5alpha-androstan-3,17-dione + NADPH + H(+). It carries out the reaction a 3-oxo-Delta(5)-steroid = a 3-oxo-Delta(4)-steroid. The enzyme catalyses pregn-5-ene-3,20-dione = progesterone. It catalyses the reaction androst-5-ene-3,17-dione = androst-4-ene-3,17-dione. The catalysed reaction is 17beta-hydroxy-androst-5-en-3-one = testosterone. It carries out the reaction 5alpha-androstane-3beta,17beta-diol + NAD(+) = 17beta-hydroxy-5alpha-androstan-3-one + NADH + H(+). Its pathway is steroid hormone biosynthesis. It participates in steroid metabolism. Its function is as follows. A bifunctional enzyme responsible for the oxidation and isomerization of 3beta-hydroxy-Delta(5)-steroid precursors to 3-oxo-Delta(4)-steroids, an essential step in steroid hormone biosynthesis. Specifically catalyzes the conversion of pregnenolone to progesterone, 17alpha-hydroxypregnenolone to 17alpha-hydroxyprogesterone, dehydroepiandrosterone (DHEA) to 4-androstenedione, and androstenediol to testosterone. Additionally, catalyzes the interconversion between 3beta-hydroxy and 3-oxo-5alpha-androstane steroids controlling the bioavalability of the active forms. Specifically converts dihydrotestosterone to its inactive form 5alpha-androstanediol, that does not bind androgen receptor/AR. Also converts androstanedione, a precursor of testosterone and estrone, to epiandrosterone. Expected to use NAD(+) as preferred electron donor for the 3-beta-hydroxy-steroid dehydrogenase activity and NADPH for the 3-ketosteroid reductase activity. The sequence is that of 3 beta-hydroxysteroid dehydrogenase/Delta 5--&gt;4-isomerase type 1 (HSD3B1) from Mesocricetus auratus (Golden hamster).